We begin with the raw amino-acid sequence, 378 residues long: uncharacterized protein (378 aa).

Cysteine 16 (for GATase activity) is an active-site residue. A Glutamine amidotransferase type-2 domain is found at 16 to 378 (CGLFGVIDRS…ELAKQLSEVE (363 aa)).

This is an uncharacterized protein from Archaeoglobus fulgidus (strain ATCC 49558 / DSM 4304 / JCM 9628 / NBRC 100126 / VC-16).